We begin with the raw amino-acid sequence, 232 residues long: Triosephosphate isomerase (232 aa).

A substrate-binding site is contributed by 6 to 8 (NLK). The Electrophile role is filled by H91. E158 acts as the Proton acceptor in catalysis. Residues G164 and S194 each coordinate substrate.

The protein belongs to the triosephosphate isomerase family. As to quaternary structure, homodimer.

It localises to the cytoplasm. It catalyses the reaction D-glyceraldehyde 3-phosphate = dihydroxyacetone phosphate. Its pathway is carbohydrate biosynthesis; gluconeogenesis. It participates in carbohydrate degradation; glycolysis; D-glyceraldehyde 3-phosphate from glycerone phosphate: step 1/1. Functionally, involved in the gluconeogenesis. Catalyzes stereospecifically the conversion of dihydroxyacetone phosphate (DHAP) to D-glyceraldehyde-3-phosphate (G3P). This chain is Triosephosphate isomerase, found in Campylobacter hominis (strain ATCC BAA-381 / DSM 21671 / CCUG 45161 / LMG 19568 / NCTC 13146 / CH001A).